The following is a 119-amino-acid chain: Small ribosomal subunit protein bS16 (119 aa).

This sequence belongs to the bacterial ribosomal protein bS16 family.

In Chlamydia abortus (strain DSM 27085 / S26/3) (Chlamydophila abortus), this protein is Small ribosomal subunit protein bS16.